The sequence spans 491 residues: Protein nucleotidyltransferase YdiU (491 aa).

ATP contacts are provided by G88, G90, R91, K111, D123, G124, R174, and R181. Catalysis depends on D250, which acts as the Proton acceptor. The Mg(2+) site is built by N251 and D260. D260 is an ATP binding site. Residues 466–484 (DDQPDRADYAEPPQPEERV) show a composition bias toward basic and acidic residues. The segment at 466-491 (DDQPDRADYAEPPQPEERVLQTFCGT) is disordered.

It belongs to the SELO family. Mg(2+) is required as a cofactor. Mn(2+) serves as cofactor.

The enzyme catalyses L-seryl-[protein] + ATP = 3-O-(5'-adenylyl)-L-seryl-[protein] + diphosphate. It catalyses the reaction L-threonyl-[protein] + ATP = 3-O-(5'-adenylyl)-L-threonyl-[protein] + diphosphate. It carries out the reaction L-tyrosyl-[protein] + ATP = O-(5'-adenylyl)-L-tyrosyl-[protein] + diphosphate. The catalysed reaction is L-histidyl-[protein] + UTP = N(tele)-(5'-uridylyl)-L-histidyl-[protein] + diphosphate. The enzyme catalyses L-seryl-[protein] + UTP = O-(5'-uridylyl)-L-seryl-[protein] + diphosphate. It catalyses the reaction L-tyrosyl-[protein] + UTP = O-(5'-uridylyl)-L-tyrosyl-[protein] + diphosphate. Nucleotidyltransferase involved in the post-translational modification of proteins. It can catalyze the addition of adenosine monophosphate (AMP) or uridine monophosphate (UMP) to a protein, resulting in modifications known as AMPylation and UMPylation. The protein is Protein nucleotidyltransferase YdiU of Bradyrhizobium sp. (strain ORS 278).